Here is a 557-residue protein sequence, read N- to C-terminus: Formate--tetrahydrofolate ligase (557 aa).

65–72 (TPAGEGKT) provides a ligand contact to ATP.

Belongs to the formate--tetrahydrofolate ligase family.

The catalysed reaction is (6S)-5,6,7,8-tetrahydrofolate + formate + ATP = (6R)-10-formyltetrahydrofolate + ADP + phosphate. The protein operates within one-carbon metabolism; tetrahydrofolate interconversion. The polypeptide is Formate--tetrahydrofolate ligase (Methylorubrum populi (strain ATCC BAA-705 / NCIMB 13946 / BJ001) (Methylobacterium populi)).